The chain runs to 231 residues: Orotate phosphoribosyltransferase (231 aa).

Lys29 is a 5-phospho-alpha-D-ribose 1-diphosphate binding site. Residue 37 to 38 coordinates orotate; it reads FF. 5-phospho-alpha-D-ribose 1-diphosphate-binding positions include 75 to 76, Arg107, Lys108, Lys111, His113, and 133 to 141; these read YK and DDVISRCTA. Orotate is bound by residues Ser137 and Arg165.

Belongs to the purine/pyrimidine phosphoribosyltransferase family. PyrE subfamily. In terms of assembly, homodimer.

It carries out the reaction orotidine 5'-phosphate + diphosphate = orotate + 5-phospho-alpha-D-ribose 1-diphosphate. It participates in pyrimidine metabolism; UMP biosynthesis via de novo pathway; UMP from orotate: step 1/2. Catalyzes the transfer of a ribosyl phosphate group from 5-phosphoribose 1-diphosphate to orotate, leading to the formation of orotidine monophosphate (OMP). The polypeptide is Orotate phosphoribosyltransferase (URA5) (Podospora anserina (Pleurage anserina)).